The following is a 301-amino-acid chain: Polynucleotide kinase (301 aa).

Homotetramer. It depends on Mg(2+) as a cofactor.

The enzyme catalyses a 5'-end dephospho-2'-deoxyribonucleoside-DNA + ATP = a 5'-end 5'-phospho-2'-deoxyribonucleoside-DNA + ADP + H(+). It carries out the reaction a 2'-deoxyribonucleoside 3'-phosphate + H2O = a 2'-deoxyribonucleoside + phosphate. Its function is as follows. Acts as a 5'-hydroxyl kinase, a 3'-phosphatase and a 2',3'-cyclic phosphodiesterase. Catalyzes the transfer of the terminal phosphate of ATP to the 5'-hydroxyl termini of ribo- and deoxyribonucleotides. In the presence of ADP the enzyme also catalyzes an exchange reaction. In the exchange reaction, an excess ADP causes the enzyme to transfer the 5' terminal phosphate from phosphorylated DNA to ADP. Involved in countering a host defense mechanism which activates T4-induced anticodon nuclease and shuts off viral translation. The polynucleotide kinase modifies the ends of nicked tRNA generated by the antiviral response of the host bacteria and facilitates repair by T4 RNA ligase. In Escherichia coli (Bacteriophage T4), this protein is Polynucleotide kinase (pseT).